The following is a 273-amino-acid chain: Tyrosinase (273 aa).

Histidine 37, histidine 53, histidine 62, histidine 189, histidine 193, and histidine 215 together coordinate Cu cation.

It belongs to the tyrosinase family. The cofactor is Cu(2+).

The catalysed reaction is 2 L-dopa + O2 = 2 L-dopaquinone + 2 H2O. It carries out the reaction L-tyrosine + O2 = L-dopaquinone + H2O. This is a copper-containing oxidase that functions in the formation of pigments such as melanins and other polyphenolic compounds. The chain is Tyrosinase (melC2) from Streptomyces lincolnensis.